We begin with the raw amino-acid sequence, 161 residues long: Peptidyl-prolyl cis-trans isomerase-like 3 (161 aa).

N-acetylserine is present on Ser2. A PPIase cyclophilin-type domain is found at Ser2 to Ile154. Position 61 is an omega-N-methylarginine (Arg61).

Belongs to the cyclophilin-type PPIase family. PPIL3 subfamily. In terms of assembly, identified in the spliceosome C complex.

It carries out the reaction [protein]-peptidylproline (omega=180) = [protein]-peptidylproline (omega=0). In terms of biological role, PPIases accelerate the folding of proteins. It catalyzes the cis-trans isomerization of proline imidic peptide bonds in oligopeptides. May be involved in pre-mRNA splicing. In Mus musculus (Mouse), this protein is Peptidyl-prolyl cis-trans isomerase-like 3 (Ppil3).